Here is a 620-residue protein sequence, read N- to C-terminus: Palmitoyltransferase ZDHHC17 (620 aa).

The Cytoplasmic portion of the chain corresponds to 1–292; it reads MADALVGYEK…LKMDKEFRQK (292 aa). ANK repeat units lie at residues 77–106, 111–140, 144–173, 177–207, 212–241, and 245–274; these read ENVT…IVDQ, LNST…DPSL, EGCS…DVDM, NGMT…SVNL, HKNT…NVDA, and KGET…AKGY. The next 2 membrane-spanning stretches (helical) occupy residues 293-313 and 314-334; these read VMLG…DLDI and DSWL…QFLS. The Cytoplasmic segment spans residues 335 to 345; that stretch reads KSFFDHSMHSA. A helical membrane pass occupies residues 346–366; that stretch reads LPLGIYLATKFWMYITWFYWF. Over 367–369 the chain is Lumenal; the sequence is WND. A helical membrane pass occupies residues 370-390; the sequence is LPFVTIHLPFLLNSLALFYNF. At 391–469 the chain is on the cytoplasmic side; sequence GKSWKSDPGI…NCVGSGNHRY (79 aa). Residues 425-475 enclose the DHHC domain; the sequence is IFCSTCLIRKPIRSKHCAVCNRCIAKFDHHCPWVGNCVGSGNHRYFMGYLF. Residue Cys455 is the S-palmitoyl cysteine intermediate of the active site. A helical transmembrane segment spans residues 470–490; it reads FMGYLFFLLCMICWMMYGCIC. At 491–504 the chain is on the lumenal side; the sequence is YWRIHCATSYTKDG. Residues 505 to 524 form a helical membrane-spanning segment; sequence FWIYITQIATCSPWMFWMFL. Topologically, residues 525 to 620 are cytoplasmic; it reads NSVFHFMWVA…QTSGSGYQLV (96 aa).

This sequence belongs to the DHHC palmitoyltransferase family. AKR/ZDHHC17 subfamily. Post-translationally, autopalmitoylated.

It is found in the golgi apparatus membrane. Its subcellular location is the cytoplasmic vesicle membrane. The protein resides in the presynaptic cell membrane. It carries out the reaction L-cysteinyl-[protein] + hexadecanoyl-CoA = S-hexadecanoyl-L-cysteinyl-[protein] + CoA. The enzyme catalyses L-cysteinyl-[protein] + tetradecanoyl-CoA = S-tetradecanoyl-L-cysteinyl-[protein] + CoA. It catalyses the reaction L-cysteinyl-[protein] + octadecanoyl-CoA = S-octadecanoyl-L-cysteinyl-[protein] + CoA. Palmitoyltransferase that catalyzes the addition of palmitate onto various protein substrates and is involved in a variety of cellular processes. Has no stringent fatty acid selectivity and in addition to palmitate can also transfer onto target proteins myristate from tetradecanoyl-CoA and stearate from octadecanoyl-CoA. Plays a role in axonogenesis. This chain is Palmitoyltransferase ZDHHC17, found in Danio rerio (Zebrafish).